We begin with the raw amino-acid sequence, 185 residues long: MTMTMNKDSLALIKQSIKTIADYPKPGIMFRDVTSLLEDASAYQATIALFVEKYQGMGFTKVVGTEARGFLFGAPLALELGIGFVPVRKPGKLPRKTIAQSYELEYGMDTLEIHVDAIKPEDKVLVVDDLLATGGTIEATVKLIRQLGGQVEHAAFVISLPDIGGEKRLAGLGLDVFALCEFEGE.

Belongs to the purine/pyrimidine phosphoribosyltransferase family. In terms of assembly, homodimer.

Its subcellular location is the cytoplasm. The catalysed reaction is AMP + diphosphate = 5-phospho-alpha-D-ribose 1-diphosphate + adenine. It functions in the pathway purine metabolism; AMP biosynthesis via salvage pathway; AMP from adenine: step 1/1. Catalyzes a salvage reaction resulting in the formation of AMP, that is energically less costly than de novo synthesis. This is Adenine phosphoribosyltransferase from Shewanella denitrificans (strain OS217 / ATCC BAA-1090 / DSM 15013).